Consider the following 824-residue polypeptide: Leucine--tRNA ligase (824 aa).

A 'HIGH' region motif is present at residues Pro-40–His-50. The 'KMSKS' region signature appears at Lys-580–Ser-584. Residue Lys-583 participates in ATP binding.

This sequence belongs to the class-I aminoacyl-tRNA synthetase family.

It is found in the cytoplasm. It catalyses the reaction tRNA(Leu) + L-leucine + ATP = L-leucyl-tRNA(Leu) + AMP + diphosphate. The sequence is that of Leucine--tRNA ligase from Alkaliphilus metalliredigens (strain QYMF).